We begin with the raw amino-acid sequence, 81 residues long: Beta-defensin 34 (81 aa).

The N-terminal stretch at 1–20 (MKTFLFLFAVLFFWSQPRMH) is a signal peptide. 3 disulfide bridges follow: Cys-28–Cys-55, Cys-35–Cys-49, and Cys-39–Cys-56. Positions 62-72 (CGRSKGNQSDE) are enriched in polar residues. The interval 62-81 (CGRSKGNQSDEGSGHMGTRG) is disordered.

Belongs to the beta-defensin family. As to expression, only expressed in epididymis (caput, corpus and cauda).

It localises to the secreted. In terms of biological role, has antibacterial activity. This is Beta-defensin 34 (Defb34) from Mus musculus (Mouse).